Here is a 696-residue protein sequence, read N- to C-terminus: Elongation factor G (696 aa).

One can recognise a tr-type G domain in the interval 8–290 (ERYRNIGISA…KVIELMPAPT (283 aa)). GTP contacts are provided by residues 17–24 (AHIDAGKT), 88–92 (DTPGH), and 142–145 (NKMD).

The protein belongs to the TRAFAC class translation factor GTPase superfamily. Classic translation factor GTPase family. EF-G/EF-2 subfamily.

The protein localises to the cytoplasm. In terms of biological role, catalyzes the GTP-dependent ribosomal translocation step during translation elongation. During this step, the ribosome changes from the pre-translocational (PRE) to the post-translocational (POST) state as the newly formed A-site-bound peptidyl-tRNA and P-site-bound deacylated tRNA move to the P and E sites, respectively. Catalyzes the coordinated movement of the two tRNA molecules, the mRNA and conformational changes in the ribosome. This is Elongation factor G from Thiobacillus denitrificans (strain ATCC 25259 / T1).